The following is a 201-amino-acid chain: IMP cyclohydrolase (201 aa).

It belongs to the archaeal IMP cyclohydrolase family.

It catalyses the reaction IMP + H2O = 5-formamido-1-(5-phospho-D-ribosyl)imidazole-4-carboxamide. The protein operates within purine metabolism; IMP biosynthesis via de novo pathway; IMP from 5-formamido-1-(5-phospho-D-ribosyl)imidazole-4-carboxamide: step 1/1. Its function is as follows. Catalyzes the cyclization of 5-formylamidoimidazole-4-carboxamide ribonucleotide to IMP. This Methanococcus maripaludis (strain C5 / ATCC BAA-1333) protein is IMP cyclohydrolase.